The following is a 307-amino-acid chain: Probable porphobilinogen deaminase (307 aa).

At cysteine 240 the chain carries S-(dipyrrolylmethanemethyl)cysteine.

The protein belongs to the HMBS family. Dipyrromethane serves as cofactor.

It catalyses the reaction 4 porphobilinogen + H2O = hydroxymethylbilane + 4 NH4(+). Its pathway is porphyrin-containing compound metabolism; protoporphyrin-IX biosynthesis; coproporphyrinogen-III from 5-aminolevulinate: step 2/4. In terms of biological role, tetrapolymerization of the monopyrrole PBG into the hydroxymethylbilane pre-uroporphyrinogen in several discrete steps. The chain is Probable porphobilinogen deaminase (hemC) from Aeropyrum pernix (strain ATCC 700893 / DSM 11879 / JCM 9820 / NBRC 100138 / K1).